The sequence spans 93 residues: Large ribosomal subunit protein eL37A (93 aa).

Residues C19, C22, C34, and C37 each coordinate Zn(2+). The C4-type zinc-finger motif lies at 19 to 37 (CRRCGRSSYHIQKSTCAQC).

It belongs to the eukaryotic ribosomal protein eL37 family. Requires Zn(2+) as cofactor.

Functionally, binds to the 23S rRNA. The sequence is that of Large ribosomal subunit protein eL37A from Drosophila melanogaster (Fruit fly).